The chain runs to 387 residues: Formate-dependent phosphoribosylglycinamide formyltransferase (387 aa).

N(1)-(5-phospho-beta-D-ribosyl)glycinamide contacts are provided by residues 12 to 13 (EL) and glutamate 72. Residues arginine 104, lysine 145, 150–155 (SSGKGQ), 185–188 (EEFI), and glutamate 193 each bind ATP. The ATP-grasp domain maps to 109 to 300 (DLAARELGLA…EFELHLRAVL (192 aa)). Mg(2+) contacts are provided by glutamate 258 and glutamate 270. N(1)-(5-phospho-beta-D-ribosyl)glycinamide-binding positions include aspartate 277, lysine 347, and 354-355 (RR).

It belongs to the PurK/PurT family. In terms of assembly, homodimer.

It catalyses the reaction N(1)-(5-phospho-beta-D-ribosyl)glycinamide + formate + ATP = N(2)-formyl-N(1)-(5-phospho-beta-D-ribosyl)glycinamide + ADP + phosphate + H(+). Its pathway is purine metabolism; IMP biosynthesis via de novo pathway; N(2)-formyl-N(1)-(5-phospho-D-ribosyl)glycinamide from N(1)-(5-phospho-D-ribosyl)glycinamide (formate route): step 1/1. Functionally, involved in the de novo purine biosynthesis. Catalyzes the transfer of formate to 5-phospho-ribosyl-glycinamide (GAR), producing 5-phospho-ribosyl-N-formylglycinamide (FGAR). Formate is provided by PurU via hydrolysis of 10-formyl-tetrahydrofolate. This is Formate-dependent phosphoribosylglycinamide formyltransferase from Anaeromyxobacter dehalogenans (strain 2CP-C).